We begin with the raw amino-acid sequence, 398 residues long: LIM domain-binding protein 2 (398 aa).

Disordered regions lie at residues 245 to 280 (PPAEPTRQTTTKRRKRKNSTNNASNSNAGNNATSAY) and 354 to 398 (DAAN…QASQ). A compositionally biased stretch (low complexity) spans 263-279 (STNNASNSNAGNNATSA). The LIM interaction domain (LID) domain maps to 323–362 (DVMVVGEPTLMGGEFGDEDERLITRLENTQYDAANGMDDE).

This sequence belongs to the LDB family. In terms of tissue distribution, expressed in adult brain, lung, spleen and kidney. Isoform b is generally expressed at a higher level than isoform a.

The protein resides in the nucleus. In terms of biological role, binds to the LIM domain of a wide variety of LIM domain-containing transcription factors. This Xenopus laevis (African clawed frog) protein is LIM domain-binding protein 2.